A 481-amino-acid chain; its full sequence is MTTALTEQNAQQAATAGRVVRVIGAVVDVEFPRGELPALYNALTAEVTLESVAKTVVLEVAQHLGDNLIRTIAMAPTDGMVRGATVTDTGKPISVPVGDVVKGHVFNALGDCLDVPGLGRDGEQWGIHREPPSFDQLEGKTEILETGIKVIDLLTPYVKGGKIGLFGGAGVGKTVLIQEMITRIAREFSGTSVFAGVGERTREGTDLFLEMEEMGVLQDTALVFGQMDEPPGVRMRVALSGLTMAEYFRDVQNQDVLLFIDNIFRFTQAGSEVSTLLGRMPSAVGYQPTLADEMGVLQERITSTKGRSITSLQAVYVPADDYTDPAPATTFAHLDATTELDRSIASKGIYPAVNPLTSTSRILEPSIVGERHYEVSQRVIGILQKNKELQDIIAILGMDELSEEDKITVARARRLERFLGQNFFVAEKFTGLPGSYVPLADTIDAFERICNGDFDHYPEQAFNGLGGLDDVEAAYKKLTGK.

167–174 (GGAGVGKT) contributes to the ATP binding site.

The protein belongs to the ATPase alpha/beta chains family. F-type ATPases have 2 components, CF(1) - the catalytic core - and CF(0) - the membrane proton channel. CF(1) has five subunits: alpha(3), beta(3), gamma(1), delta(1), epsilon(1). CF(0) has three main subunits: a(1), b(2) and c(9-12). The alpha and beta chains form an alternating ring which encloses part of the gamma chain. CF(1) is attached to CF(0) by a central stalk formed by the gamma and epsilon chains, while a peripheral stalk is formed by the delta and b chains.

The protein resides in the cell membrane. It catalyses the reaction ATP + H2O + 4 H(+)(in) = ADP + phosphate + 5 H(+)(out). Functionally, produces ATP from ADP in the presence of a proton gradient across the membrane. The catalytic sites are hosted primarily by the beta subunits. In Corynebacterium efficiens (strain DSM 44549 / YS-314 / AJ 12310 / JCM 11189 / NBRC 100395), this protein is ATP synthase subunit beta.